Here is a 123-residue protein sequence, read N- to C-terminus: Small ribosomal subunit protein uS13c (123 aa).

Residues 90 to 123 (GKRHRNSLPVRGQRTRTNARSRRGAKKTVTGKKK) form a disordered region. Residues 102–123 (QRTRTNARSRRGAKKTVTGKKK) show a composition bias toward basic residues.

Belongs to the universal ribosomal protein uS13 family. In terms of assembly, part of the 30S ribosomal subunit.

The protein localises to the plastid. It localises to the chloroplast. Its function is as follows. Located at the top of the head of the 30S subunit, it contacts several helices of the 16S rRNA. This is Small ribosomal subunit protein uS13c from Thalassiosira pseudonana (Marine diatom).